The following is a 751-amino-acid chain: Lysine decarboxylase LdcA (751 aa).

This sequence belongs to the Orn/Lys/Arg decarboxylase class-I family. Homodecamer.

It catalyses the reaction L-lysine + H(+) = cadaverine + CO2. Plays an essential role in lysine utilization by acting as a lysine decarboxylase. The sequence is that of Lysine decarboxylase LdcA from Pseudomonas aeruginosa (strain ATCC 15692 / DSM 22644 / CIP 104116 / JCM 14847 / LMG 12228 / 1C / PRS 101 / PAO1).